The chain runs to 203 residues: ADP-ribosylation factor-like protein 6-interacting protein 1 (203 aa).

Residues 1–41 lie on the Cytoplasmic side of the membrane; sequence MAEGDNRSSNLLAVETASLEEQLQGWGEVMLMADKVLRWER. A helical transmembrane segment spans residues 42–62; that stretch reads AWFPPAIMGVVSLLFLIIYYL. The Lumenal segment spans residues 63–65; it reads DPS. A helical membrane pass occupies residues 66-86; it reads VLSGVSCFVMFLCLADYLVPI. Residues 87–133 lie on the Cytoplasmic side of the membrane; it reads LAPRIFGSNKWTTEQQQRFHEICSNLVKTRRRAVGWWKRLFSLKEEK. Residues 134-175 traverse the membrane as a helical segment; it reads PKMYFMTMIISLAAVAWVGQQVHNLLLTYLIVTFVLLLPGLN. At 176–203 the chain is on the lumenal side; sequence QHGIILKYIGMAKREINKLLKQKEKKNE.

Belongs to the ARL6ip family. In terms of assembly, homooligomer. Heterodimer with ARL6IP5. Interacts with ARL6. Interacts with TMEM33. Interacts with ATL1. As to expression, expressed in the cerebral cortex, cerebellum, hippocampus, olfactory bulbs, medulla oblongate and limbic system (at protein level). Ubiquitous. Expressed in all hematopoietic cell lineages, with highest levels in early myeloid progenitor cells.

It localises to the endomembrane system. The protein resides in the endoplasmic reticulum membrane. Its subcellular location is the endoplasmic reticulum. Functionally, positively regulates SLC1A1/EAAC1-mediated glutamate transport by increasing its affinity for glutamate in a PKC activity-dependent manner. Promotes the catalytic efficiency of SLC1A1/EAAC1 probably by reducing its interaction with ARL6IP5, a negative regulator of SLC1A1/EAAC1-mediated glutamate transport. Plays a role in the formation and stabilization of endoplasmic reticulum tubules. Negatively regulates apoptosis, possibly by modulating the activity of caspase-9 (CASP9). Inhibits cleavage of CASP9-dependent substrates and downstream markers of apoptosis but not CASP9 itself. May be involved in protein transport, membrane trafficking, or cell signaling during hematopoietic maturation. This Mus musculus (Mouse) protein is ADP-ribosylation factor-like protein 6-interacting protein 1 (Arl6ip1).